Reading from the N-terminus, the 668-residue chain is MKRFAAVTLAALMLLTVFASAASAADSVEIRGPVFNGSNIVEIVGDGITIDATQFAAFYYDIDDNVTTETLSIKDVSGNSGNVIGEGGIVYSTKIQKVDYEYYKPSLGWDNYSLLGFFAEKYIPLKSNSADKLAKLVIDSDDKITLRTGETLDIGQGYTLQAKQVDVDGEKVWLEFDRDGEYVDDEIIEVGADDSTWDVELDDIQDEDDVTVMRVHVNQVFQGAVDSIAQIEGIWLIDYANAMTIESDDEFGDLDDVSINGDTLNITNEDTFTLTRDSTNELAEGLSFKVADTSSNVLRFYLAKEFTDPGTYEVRGSVASGEASWDASNFAGFYYDLDDNVETESLSVSELNGNVIGEGGLVYTTSIKKVDYDYENEDAGWDQYPIIGFFAEEYIPLKANSADKLAKLVLDSDDKITLRTGETFDLGEGYSIQAKQVDVDGEKVWLEFDKDGEYVDDEIIEVGSNSDNTWDVELDDIEDEDDVVVLKVHVNQVFRGAVDSIAQIEGIWLIDYANAMTIESDDEFGDLDDVSIQGDTLKISNEDTFTLTRDSDEDIGEGMYFKVADTPTSELRYYPAIERIVGNETTSITKPDESGNETVSDNETMPDNTSSETPDLNETDTPEEPTTTPEEPTDNETEPDESNGSPGFGVVLGLAGLLGVVYLVRRNN.

The N-terminal stretch at Met-1–Ala-24 is a signal peptide. Asn-36, Asn-65, Asn-111, Asn-265, Asn-583, Asn-596, Asn-602, Asn-608, Asn-617, and Asn-635 each carry an N-linked (GlcNAc...) asparagine glycan. The tract at residues Glu-584–Val-650 is disordered. Over residues Asn-596 to Ser-611 the composition is skewed to polar residues. Residues Glu-631 to Glu-641 show a composition bias toward acidic residues. Residues Gly-644–Val-664 traverse the membrane as a helical segment.

It belongs to the Methanosarcinales S-layer protein family. In terms of processing, glycosylated.

It is found in the secreted. Its subcellular location is the cell wall. The protein resides in the S-layer. It localises to the cell membrane. Functionally, S-layer protein. The S-layer is a paracrystalline mono-layered assembly of proteins which coat the surface of the cell. The polypeptide is Major S-layer protein (Methanosarcina barkeri (strain Fusaro / DSM 804)).